An 88-amino-acid chain; its full sequence is Small ribosomal subunit protein uS17 (88 aa).

It belongs to the universal ribosomal protein uS17 family. Part of the 30S ribosomal subunit.

Functionally, one of the primary rRNA binding proteins, it binds specifically to the 5'-end of 16S ribosomal RNA. In Vesicomyosocius okutanii subsp. Calyptogena okutanii (strain HA), this protein is Small ribosomal subunit protein uS17.